Here is a 359-residue protein sequence, read N- to C-terminus: Phospho-N-acetylmuramoyl-pentapeptide-transferase (359 aa).

10 consecutive transmembrane segments (helical) span residues 26-46, 75-95, 97-117, 134-154, 166-186, 197-217, 233-253, 261-281, 286-306, and 336-356; these read TIYA…WLIR, GGVL…NLTI, YVWL…ADDY, LACE…KPGF, VLPD…VGAA, GLAI…AYFA, GVGE…GFLW, VFMG…LAIV, ILLA…IFQV, and KVIV…ISTL.

The protein belongs to the glycosyltransferase 4 family. MraY subfamily. Mg(2+) serves as cofactor.

It is found in the cell inner membrane. The enzyme catalyses UDP-N-acetyl-alpha-D-muramoyl-L-alanyl-gamma-D-glutamyl-meso-2,6-diaminopimeloyl-D-alanyl-D-alanine + di-trans,octa-cis-undecaprenyl phosphate = di-trans,octa-cis-undecaprenyl diphospho-N-acetyl-alpha-D-muramoyl-L-alanyl-D-glutamyl-meso-2,6-diaminopimeloyl-D-alanyl-D-alanine + UMP. It participates in cell wall biogenesis; peptidoglycan biosynthesis. Catalyzes the initial step of the lipid cycle reactions in the biosynthesis of the cell wall peptidoglycan: transfers peptidoglycan precursor phospho-MurNAc-pentapeptide from UDP-MurNAc-pentapeptide onto the lipid carrier undecaprenyl phosphate, yielding undecaprenyl-pyrophosphoryl-MurNAc-pentapeptide, known as lipid I. The sequence is that of Phospho-N-acetylmuramoyl-pentapeptide-transferase from Syntrophus aciditrophicus (strain SB).